A 74-amino-acid chain; its full sequence is Protein kish-B (74 aa).

The first 22 residues, Met1 to Ala22, serve as a signal peptide directing secretion. Residues Tyr23 to Gly52 lie on the Extracellular side of the membrane. A helical transmembrane segment spans residues Ser53–Ile73. A topological domain (cytoplasmic) is located at residue Lys74.

Belongs to the KISH family.

The protein localises to the golgi apparatus membrane. Its function is as follows. Involved in the early part of the secretory pathway. This chain is Protein kish-B (tmem167b), found in Xenopus laevis (African clawed frog).